The following is a 489-amino-acid chain: Rhamnulokinase (489 aa).

13–17 (ASSGR) contacts ATP. Cysteines 68 and 222 form a disulfide. Substrate-binding positions include Gly-83 and 236–238 (HDT). The active-site Proton acceptor is Asp-237. Thr-259 serves as a coordination point for ATP. Asn-296 serves as a coordination point for substrate. Position 304 (Gln-304) interacts with ATP. A disulfide bridge connects residues Cys-353 and Cys-370. Gly-402 serves as a coordination point for ATP. Cys-413 and Cys-417 are oxidised to a cystine.

This sequence belongs to the rhamnulokinase family. Mg(2+) serves as cofactor.

It catalyses the reaction L-rhamnulose + ATP = L-rhamnulose 1-phosphate + ADP + H(+). Its pathway is carbohydrate degradation; L-rhamnose degradation; glycerone phosphate from L-rhamnose: step 2/3. Its function is as follows. Involved in the catabolism of L-rhamnose (6-deoxy-L-mannose). Catalyzes the transfer of the gamma-phosphate group from ATP to the 1-hydroxyl group of L-rhamnulose to yield L-rhamnulose 1-phosphate. In Salmonella enteritidis PT4 (strain P125109), this protein is Rhamnulokinase.